The following is a 197-amino-acid chain: Probable GTP-binding protein EngB (197 aa).

An EngB-type G domain is found at 22 to 195; it reads NLPEIAFVGR…VDYLFDDLVE (174 aa). GTP contacts are provided by residues 30–37, 57–61, 75–78, 142–145, and 174–176; these read GRSNVGKS, GKTRL, DLPG, TKSD, and FSS. Mg(2+) contacts are provided by S37 and T59.

It belongs to the TRAFAC class TrmE-Era-EngA-EngB-Septin-like GTPase superfamily. EngB GTPase family. Mg(2+) serves as cofactor.

In terms of biological role, necessary for normal cell division and for the maintenance of normal septation. This chain is Probable GTP-binding protein EngB, found in Clostridium perfringens (strain SM101 / Type A).